A 222-amino-acid chain; its full sequence is Peptidyl-prolyl cis-trans isomerase FKBP7 (222 aa).

Positions 1 to 23 (MPKTMHFLFRFIVFFYLWGLFTA) are cleaved as a signal peptide. Residue asparagine 45 is glycosylated (N-linked (GlcNAc...) asparagine). One can recognise a PPIase FKBP-type domain in the interval 53–145 (GDLLNAHYDG…IFEIELYAVT (93 aa)). 2 consecutive EF-hand domains span residues 145 to 180 (TKGP…EFEK) and 189 to 222 (YQDA…HDEL). 9 residues coordinate Ca(2+): aspartate 158, aspartate 160, aspartate 162, glutamine 164, glutamate 169, aspartate 202, aspartate 204, aspartate 206, and glutamate 213. Positions 200-222 (KNDHDGDGFISPKEYNVYQHDEL) are disordered. The Retention in the endoplasmic reticulum signature appears at 219 to 222 (HDEL).

In terms of processing, glycosylated.

Its subcellular location is the endoplasmic reticulum lumen. It catalyses the reaction [protein]-peptidylproline (omega=180) = [protein]-peptidylproline (omega=0). Functionally, PPIases accelerate the folding of proteins during protein synthesis. In Homo sapiens (Human), this protein is Peptidyl-prolyl cis-trans isomerase FKBP7 (FKBP7).